We begin with the raw amino-acid sequence, 502 residues long: ATP synthase subunit alpha (502 aa).

Residue 169 to 176 (GDRQTGKT) participates in ATP binding.

This sequence belongs to the ATPase alpha/beta chains family. In terms of assembly, F-type ATPases have 2 components, CF(1) - the catalytic core - and CF(0) - the membrane proton channel. CF(1) has five subunits: alpha(3), beta(3), gamma(1), delta(1), epsilon(1). CF(0) has three main subunits: a(1), b(2) and c(9-12). The alpha and beta chains form an alternating ring which encloses part of the gamma chain. CF(1) is attached to CF(0) by a central stalk formed by the gamma and epsilon chains, while a peripheral stalk is formed by the delta and b chains.

Its subcellular location is the cell inner membrane. The catalysed reaction is ATP + H2O + 4 H(+)(in) = ADP + phosphate + 5 H(+)(out). Its function is as follows. Produces ATP from ADP in the presence of a proton gradient across the membrane. The alpha chain is a regulatory subunit. The polypeptide is ATP synthase subunit alpha (Nitratidesulfovibrio vulgaris (strain DSM 19637 / Miyazaki F) (Desulfovibrio vulgaris)).